Reading from the N-terminus, the 102-residue chain is PqqA binding protein (102 aa).

It belongs to the PqqD family. In terms of assembly, monomer. Interacts with PqqE.

It functions in the pathway cofactor biosynthesis; pyrroloquinoline quinone biosynthesis. In terms of biological role, functions as a PqqA binding protein and presents PqqA to PqqE, in the pyrroloquinoline quinone (PQQ) biosynthetic pathway. This is PqqA binding protein from Rhodopseudomonas palustris (strain HaA2).